The chain runs to 868 residues: Aconitate hydratase B (868 aa).

Substrate is bound by residues Arg-192, 235 to 237 (SSR), 404 to 406 (QDT), and Ser-488. [4Fe-4S] cluster-binding residues include Cys-700, Cys-758, and Cys-761. The substrate site is built by Arg-780 and Arg-785.

This sequence belongs to the aconitase/IPM isomerase family. In terms of assembly, monomer. [4Fe-4S] cluster is required as a cofactor.

It catalyses the reaction citrate = D-threo-isocitrate. The enzyme catalyses (2S,3R)-3-hydroxybutane-1,2,3-tricarboxylate = 2-methyl-cis-aconitate + H2O. Its pathway is carbohydrate metabolism; tricarboxylic acid cycle; isocitrate from oxaloacetate: step 2/2. It functions in the pathway organic acid metabolism; propanoate degradation. Involved in the catabolism of short chain fatty acids (SCFA) via the tricarboxylic acid (TCA)(acetyl degradation route) and probably via the 2-methylcitrate cycle I (propionate degradation route). Catalyzes the reversible isomerization of citrate to isocitrate via cis-aconitate. Catalyzes the hydration of 2-methyl-cis-aconitate to yield (2R,3S)-2-methylisocitrate. The apo form of AcnB functions as a RNA-binding regulatory protein. This Synechocystis sp. (strain ATCC 27184 / PCC 6803 / Kazusa) protein is Aconitate hydratase B (acnB).